Here is a 128-residue protein sequence, read N- to C-terminus: Probable heavy metal-dependent transcriptional regulator HI_0293 (128 aa).

The 69-residue stretch at 1–69 (MNISEAAKLV…LHQIAQLLAL (69 aa)) folds into the HTH merR-type domain. Positions 4 to 23 (SEAAKLVGLSTKQIRDYEKM) form a DNA-binding region, H-T-H motif.

The protein localises to the cytoplasm. Its function is as follows. Could be a copper-dependent transcriptional activator of the ATPase HI_0290. The polypeptide is Probable heavy metal-dependent transcriptional regulator HI_0293 (Haemophilus influenzae (strain ATCC 51907 / DSM 11121 / KW20 / Rd)).